A 140-amino-acid polypeptide reads, in one-letter code: Nucleoside diphosphate kinase (140 aa).

Lysine 11, phenylalanine 59, arginine 87, threonine 93, arginine 104, and asparagine 114 together coordinate ATP. Histidine 117 acts as the Pros-phosphohistidine intermediate in catalysis.

This sequence belongs to the NDK family. As to quaternary structure, homotetramer. Mg(2+) is required as a cofactor.

Its subcellular location is the cytoplasm. The enzyme catalyses a 2'-deoxyribonucleoside 5'-diphosphate + ATP = a 2'-deoxyribonucleoside 5'-triphosphate + ADP. The catalysed reaction is a ribonucleoside 5'-diphosphate + ATP = a ribonucleoside 5'-triphosphate + ADP. Functionally, major role in the synthesis of nucleoside triphosphates other than ATP. The ATP gamma phosphate is transferred to the NDP beta phosphate via a ping-pong mechanism, using a phosphorylated active-site intermediate. The protein is Nucleoside diphosphate kinase of Rhizorhabdus wittichii (strain DSM 6014 / CCUG 31198 / JCM 15750 / NBRC 105917 / EY 4224 / RW1) (Sphingomonas wittichii).